A 332-amino-acid polypeptide reads, in one-letter code: MLVDGKLVCVTGAGGYIASWIVKLLLERGYTVRGTVRNPTDPKNNHLRELQGAKERLTLHSADLLDYEALCATIDGCDGVFHTASPMTDDPETMLEPAVNGAKFVIDAAAKAKVKRVVFTSSIGAVYMNPNRDTQAIVDENCWSDLDFCKNTKNWYCYGKMLAEQSAWETAKAKGVDLVVLNPVLVLGPPLQSAINASLVHILKYLTGSAKTYANLTQVYVDVRDVALGHVLVYEAPSASGRYILAETALHRGEVVEILAKFFPEYPLPTKCSDEKNPRAKPYKFTTQKIKDLGLEFKPIKQSLYESVKSLQEKGHLPLPQDSNQNEVIIES.

Residues 12-18 (GAGGYIA), R37, K43, 63-64 (DL), 83-85 (TAS), Y156, K160, 183-186 (PVLV), and S198 each bind NADP(+). C149 and C157 are oxidised to a cystine. The Proton donor role is filled by K160.

Belongs to the NAD(P)-dependent epimerase/dehydratase family. Dihydroflavonol-4-reductase subfamily. Expressed at low levels in leaves, stems and flowers.

It catalyses the reaction (E)-cinnamaldehyde + NADP(+) + CoA = (E)-cinnamoyl-CoA + NADPH + H(+). It functions in the pathway aromatic compound metabolism; phenylpropanoid biosynthesis. Its function is as follows. Cinnamoyl-CoA reductase probably involved in the formation of phenolic compounds associated with the hypersensitive response. Seems not to be involved in lignin biosynthesis. In Arabidopsis thaliana (Mouse-ear cress), this protein is Cinnamoyl-CoA reductase 2 (CCR2).